A 397-amino-acid polypeptide reads, in one-letter code: Succinate--CoA ligase [ADP-forming] subunit beta (397 aa).

Residues 9–254 (KALLKGYGAP…ETEEDAKEIE (246 aa)) form the ATP-grasp domain. ATP contacts are provided by residues lysine 46, 53–55 (GRG), glutamate 109, alanine 112, and glutamate 117. The Mg(2+) site is built by asparagine 209 and aspartate 223. Substrate-binding positions include asparagine 274 and 331–333 (GIM).

This sequence belongs to the succinate/malate CoA ligase beta subunit family. In terms of assembly, heterotetramer of two alpha and two beta subunits. The cofactor is Mg(2+).

It catalyses the reaction succinate + ATP + CoA = succinyl-CoA + ADP + phosphate. The catalysed reaction is GTP + succinate + CoA = succinyl-CoA + GDP + phosphate. It participates in carbohydrate metabolism; tricarboxylic acid cycle; succinate from succinyl-CoA (ligase route): step 1/1. Succinyl-CoA synthetase functions in the citric acid cycle (TCA), coupling the hydrolysis of succinyl-CoA to the synthesis of either ATP or GTP and thus represents the only step of substrate-level phosphorylation in the TCA. The beta subunit provides nucleotide specificity of the enzyme and binds the substrate succinate, while the binding sites for coenzyme A and phosphate are found in the alpha subunit. The polypeptide is Succinate--CoA ligase [ADP-forming] subunit beta (Rhizobium etli (strain CIAT 652)).